The primary structure comprises 101 residues: NAD(P)H-quinone oxidoreductase subunit 4L, chloroplastic (101 aa).

The next 3 membrane-spanning stretches (helical) occupy residues 2–22 (MLEH…YGLI), 32–52 (MCLE…SDFF), and 61–81 (IFSI…PAIV).

The protein belongs to the complex I subunit 4L family. In terms of assembly, NDH is composed of at least 16 different subunits, 5 of which are encoded in the nucleus.

It is found in the plastid. The protein localises to the chloroplast thylakoid membrane. The catalysed reaction is a plastoquinone + NADH + (n+1) H(+)(in) = a plastoquinol + NAD(+) + n H(+)(out). It catalyses the reaction a plastoquinone + NADPH + (n+1) H(+)(in) = a plastoquinol + NADP(+) + n H(+)(out). Functionally, NDH shuttles electrons from NAD(P)H:plastoquinone, via FMN and iron-sulfur (Fe-S) centers, to quinones in the photosynthetic chain and possibly in a chloroplast respiratory chain. The immediate electron acceptor for the enzyme in this species is believed to be plastoquinone. Couples the redox reaction to proton translocation, and thus conserves the redox energy in a proton gradient. The chain is NAD(P)H-quinone oxidoreductase subunit 4L, chloroplastic from Manihot esculenta (Cassava).